A 240-amino-acid polypeptide reads, in one-letter code: Protein RoBo-1 (240 aa).

The first 26 residues, 1 to 26 (MSWFLVLKCLLTVCIISHLSVSSTES), serve as a signal peptide directing secretion. N42 carries an N-linked (GlcNAc...) asparagine glycan. Cystine bridges form between C47/C76, C81/C102, C103/C108, C127/C151, and C144/C171. N153 carries N-linked (GlcNAc...) asparagine glycosylation.

This sequence belongs to the CNF-like-inhibitor family. Post-translationally, N-glycosylated. Expressed abundantly in bone, including the lengthening growth plate where cartilage is remodeled into bone.

The protein resides in the secreted. In terms of biological role, may play a novel role in the growth or remodeling of bone. The polypeptide is Protein RoBo-1 (Rattus norvegicus (Rat)).